The sequence spans 292 residues: E3 ubiquitin-protein ligase RNF144A (292 aa).

Residues 16–236 are TRIAD supradomain; sequence PLVSCKLCLG…YDKGPCRNKL (221 aa). 14 residues coordinate Zn(2+): C20, C23, C43, C46, C111, C116, C135, C138, C143, C146, H151, C156, C185, and C188. An RING-type 1 zinc finger spans residues 20–70; it reads CKLCLGEYPAEQMTTIAQCQCIFCTLCLKQYVELLIKEGLETAISCPDAAC. An IBR-type zinc finger spans residues 91 to 156; the sequence is QRYKKLQFER…KARWHPGQGC (66 aa). Residues 185 to 214 form an RING-type 2; atypical zinc finger; it reads CPKCRVYIERDEGCAQMMCKNCKHAFCWYC. C198 is an active-site residue. Residues C203, C206, C211, C214, H226, and C232 each coordinate Zn(2+). A helical transmembrane segment spans residues 250–270; that stretch reads VVGIFAGFGLLLLVASPFLLL.

This sequence belongs to the RBR family. RNF144 subfamily. As to quaternary structure, self-associates. Interacts with UBE2L3. In terms of processing, autoubiquitinated.

Its subcellular location is the cell membrane. The protein resides in the cytoplasmic vesicle membrane. The enzyme catalyses [E2 ubiquitin-conjugating enzyme]-S-ubiquitinyl-L-cysteine + [acceptor protein]-L-lysine = [E2 ubiquitin-conjugating enzyme]-L-cysteine + [acceptor protein]-N(6)-ubiquitinyl-L-lysine.. It functions in the pathway protein modification; protein ubiquitination. In terms of biological role, E3 ubiquitin-protein ligase which accepts ubiquitin from E2 ubiquitin-conjugating enzymes UBE2L3 and UBE2L6 in the form of a thioester and then directly transfers the ubiquitin to targeted substrates. Mediates the ubiquitination and degradation of the DNA damage kinase PRKDC during DNA damage. Positively regulates DNA virus or exogenous cytosolic DNA-triggered innate immune response by mediating STING1 ubiquitination and increasing its 'Lys-6'-linked ubiquitination and translocation from the endoplasmic reticulum to the Golgi leading to downstream signaling pathways. Plays a positive role in EGF-dependent cell proliferation by prolonging EGF/EGFR signaling during EGF stimulation through EGFR ubiquitination. Increases ERK activity independently of EGFR signaling by promoting polyubiquitination and subsequent degradation of VRK3 in the cytosol. The protein is E3 ubiquitin-protein ligase RNF144A (Rnf144a) of Mus musculus (Mouse).